A 519-amino-acid chain; its full sequence is Lysine histidine transporter-like 8 (519 aa).

The tract at residues 1–44 is disordered; the sequence is MDERPETELISIPATPRVSTPEILTPSGQRSPRPATKPSSATWT. Residues 1 to 114 are Cytoplasmic-facing; that stretch reads MDERPETELI…NLNAGVGFQA (114 aa). 2 helical membrane-spanning segments follow: residues 115-135 and 136-156; these read LVLP…SLTI and AYCW…AVPG. Over 157-176 the chain is Cytoplasmic; that stretch reads KRYNRYVELAQAAFGERLGV. Residues 177-197 traverse the membrane as a helical segment; it reads WLALFPTVYLSAGTATALILI. At 198–217 the chain is on the extracellular side; it reads GGETMKLFFQIVCGPLCTSN. Residues 218 to 238 traverse the membrane as a helical segment; that stretch reads PLTTVEWYLVFTSLCIVLSQL. Residues 239–243 lie on the Cytoplasmic side of the membrane; the sequence is PNLNS. Residues 244-264 traverse the membrane as a helical segment; that stretch reads IAGLSLIGAVTAITYSTMVWV. At 265-282 the chain is on the extracellular side; sequence LSVSQPRPATISYEPLSM. The helical transmembrane segment at 283-303 threads the bilayer; sequence PSTSGSLFAVLNALGIIAFAF. The Cytoplasmic portion of the chain corresponds to 304-333; sequence RGHNLVLEIQSTMPSTFKHPAHVPMWRGAK. Residues 334–354 form a helical membrane-spanning segment; it reads ISYFLIALCIFPISIGGFWAY. The Extracellular portion of the chain corresponds to 355–377; it reads GNLMPSGGMLAALYAFHIHDIPR. A helical transmembrane segment spans residues 378 to 398; the sequence is GLLATAFLLVVFSCLSSFQIY. The Cytoplasmic portion of the chain corresponds to 399–427; sequence SMPAFDSFEAGYTSRTNKPCSIWVRSGFR. The helical transmembrane segment at 428–448 threads the bilayer; that stretch reads VFFGFVSFFIGVALPFLSSLA. Residue Gly-449 is a topological domain, extracellular. A helical membrane pass occupies residues 450–470; it reads LLGGLTLPVTFAYPCFMWVLI. The Cytoplasmic portion of the chain corresponds to 471–485; the sequence is KKPAKYSFNWYFHWG. Residues 486 to 506 traverse the membrane as a helical segment; the sequence is LGWLGVAFSLAFSIGGIWSMV. Residues 507–519 lie on the Extracellular side of the membrane; it reads TNGLKLKFFKPPN.

It belongs to the amino acid/polyamine transporter 2 family. Amino acid/auxin permease (AAAP) (TC 2.A.18.2) subfamily.

The protein resides in the cell membrane. Its function is as follows. Amino acid transporter. The chain is Lysine histidine transporter-like 8 (AATL1) from Arabidopsis thaliana (Mouse-ear cress).